We begin with the raw amino-acid sequence, 136 residues long: 2-hydroxyisobutanoyl-CoA mutase small subunit (136 aa).

The B12-binding domain maps to 5–133 (PIRVLLAKVG…DSIRSLVAAR (129 aa)). Histidine 18 is an adenosylcob(III)alamin binding site.

The protein belongs to the acyl-CoA mutase small subunit family. As to quaternary structure, homotetramer composed of two large substrate-binding subunits (HcmA) and two small cobalamin-binding subunits (HcmB). Requires adenosylcob(III)alamin as cofactor.

The enzyme catalyses 2-hydroxyisobutanoyl-CoA = (3S)-3-hydroxybutanoyl-CoA. In terms of biological role, together with HcmA, catalyzes the isomerization of 2-hydroxyisobutyryl-CoA and 3-hydroxybutyryl-CoA. Is specific for 2-hydroxyisobutyryl-CoA and (S)-3-hydroxybutyryl-CoA, and shows only very low activity with (R)-3-hydroxybutyryl-CoA, isobutyryl-CoA and butyryl-CoA. In vitro, can isomerize pivalyl-CoA and isovaleryl-CoA, with much lower efficiency. Plays a central role in the degradation of substrates bearing a tert-butyl moiety, such as the fuel oxygenate methyl tert-butyl ether (MTBE) and its metabolites. In Aquincola tertiaricarbonis, this protein is 2-hydroxyisobutanoyl-CoA mutase small subunit.